Consider the following 260-residue polypeptide: BTB/POZ domain-containing protein KCTD21 (260 aa).

Residues aspartate 3–glutamate 72 enclose the BTB domain. Residues glutamine 88–leucine 112 adopt a coiled-coil conformation.

Homopentamer. Interacts with KCTD11; KCTD21 and KCTD11 may associate in pentameric assemblies. Interacts (via BTB domain) with CUL3; indicative for a participation in a BCR (BTB-CUL3-RBX1) E3 ubiquitin-protein ligase complex. In terms of tissue distribution, highly expressed in cerebellum and brain. Expression is down-regulated in medulloblastoma.

Its pathway is protein modification; protein ubiquitination. Probable substrate-specific adapter of a BCR (BTB-CUL3-RBX1) E3 ubiquitin-protein ligase complex mediating the ubiquitination and subsequent proteasomal degradation of target proteins. Promotes the ubiquitination of HDAC1. Can function as antagonist of the Hedgehog pathway by affecting the nuclear transfer of transcription factor GLI1; the function probably occurs via HDAC1 down-regulation, keeping GLI1 acetylated and inactive. Inhibits cell growth and tumorigenicity of medulloblastoma (MDB). The protein is BTB/POZ domain-containing protein KCTD21 (KCTD21) of Homo sapiens (Human).